Reading from the N-terminus, the 325-residue chain is Prenytransferase adrG (325 aa).

7 helical membrane-spanning segments follow: residues 47-67, 71-91, 117-137, 163-183, 189-209, 236-256, and 258-278; these read LVGVAFSASISSTKIPIAVLL, MLLSIWSIFLRSAGCVWDDLI, ALLLTVALFACGGTVLIFLPW, PQITLMNIGWAVPMAMHSLGL, MTPTVCMFLFIGSVIIMIDVI, LLSYSLLCASTGFLAMAGVLT, and LGLPFFVLSVGGHFCGFWVLL.

It belongs to the UbiA prenyltransferase family. The cofactor is Mg(2+).

It localises to the membrane. The enzyme catalyses 3,5-dimethylorsellinate + (2E,6E)-farnesyl diphosphate = (3R)-3-farnesyl-6-hydroxy-2,3,5-trimethyl-4-oxocyclohexa-1,5-diene-1-carboxylate + diphosphate + H(+). The protein operates within secondary metabolite biosynthesis; terpenoid biosynthesis. Functionally, prenytransferase; part of the gene cluster that mediates the biosynthesis of andrastins, meroterpenoid compounds that exhibit inhibitory activity against ras farnesyltransferase, suggesting that they could be promising leads for antitumor agents. The first step of the pathway is the synthesis of 3,5-dimethylorsellinic acid (DMOA) by the polyketide synthase adrD via condensation of one acetyl-CoA starter unit with 3 malonyl-CoA units and 2 methylations. DMAO is then converted to farnesyl-DMAO by the prenyltransferase adrG. The methyltransferase adrK catalyzes the methylation of the carboxyl group of farnesyl-DMAO to farnesyl-DMAO methyl ester which is further converted to epoxyfarnesyl-DMAO methyl ester by the FAD-dependent monooxygenase adrH. The terpene cyclase adrI then catalyzes the carbon skeletal rearrangement to generate the andrastin E, the first compound in the pathway having the andrastin scaffold, with the tetracyclic ring system. The post-cyclization tailoring enzymes adrF, adrE, adrJ, and adrA, are involved in the conversion of andrastin E into andrastin A. The short chain dehydrogenase adrF is responsible for the oxidation of the C-3 a hydroxyl group of andrastin E to yield the corresponding ketone, andrastin D. The ketoreductase adrE stereoselectively reduces the carbonyl moiety to reverse the stereochemistry of the C-3 position to yield andrastin F. The acetyltransferase adrJ is the acetyltransferase that attaches the acetyl group to the C-3 hydroxyl group of andrastin F to yield andrastin C. Finally, the cytochrome P450 monooxygenase adrA catalyzes two sequential oxidation reactions of the C-23 methyl group, to generate the corresponding alcohol andrastin B, and aldehyde andrastin A. In Penicillium rubens (strain ATCC 28089 / DSM 1075 / NRRL 1951 / Wisconsin 54-1255) (Penicillium chrysogenum), this protein is Prenytransferase adrG.